The chain runs to 194 residues: Small ribosomal subunit protein uS11m (194 aa).

The protein belongs to the universal ribosomal protein uS11 family. Component of the mitochondrial small ribosomal subunit (mt-SSU). Mature mammalian 55S mitochondrial ribosomes consist of a small (28S) and a large (39S) subunit. The 28S small subunit contains a 12S ribosomal RNA (12S mt-rRNA) and 30 different proteins. The 39S large subunit contains a 16S rRNA (16S mt-rRNA), a copy of mitochondrial valine transfer RNA (mt-tRNA(Val)), which plays an integral structural role, and 52 different proteins.

The protein localises to the mitochondrion. The protein is Small ribosomal subunit protein uS11m (MRPS11) of Homo sapiens (Human).